The chain runs to 69 residues: Large ribosomal subunit protein bL31 (69 aa).

Cys-17, Cys-19, Cys-37, and Cys-40 together coordinate Zn(2+).

This sequence belongs to the bacterial ribosomal protein bL31 family. Type A subfamily. As to quaternary structure, part of the 50S ribosomal subunit. The cofactor is Zn(2+).

Binds the 23S rRNA. The chain is Large ribosomal subunit protein bL31 from Caldicellulosiruptor saccharolyticus (strain ATCC 43494 / DSM 8903 / Tp8T 6331).